Consider the following 298-residue polypeptide: Ribosomal RNA small subunit methyltransferase A (298 aa).

S-adenosyl-L-methionine contacts are provided by Asn35, Leu37, Gly62, Glu83, Asp108, and Asn133.

The protein belongs to the class I-like SAM-binding methyltransferase superfamily. rRNA adenine N(6)-methyltransferase family. RsmA subfamily.

It localises to the cytoplasm. It carries out the reaction adenosine(1518)/adenosine(1519) in 16S rRNA + 4 S-adenosyl-L-methionine = N(6)-dimethyladenosine(1518)/N(6)-dimethyladenosine(1519) in 16S rRNA + 4 S-adenosyl-L-homocysteine + 4 H(+). In terms of biological role, specifically dimethylates two adjacent adenosines (A1518 and A1519) in the loop of a conserved hairpin near the 3'-end of 16S rRNA in the 30S particle. May play a critical role in biogenesis of 30S subunits. This is Ribosomal RNA small subunit methyltransferase A from Streptococcus pyogenes serotype M4 (strain MGAS10750).